We begin with the raw amino-acid sequence, 237 residues long: Regulator of G-protein signaling 9-binding protein (237 aa).

Over 1-214 (MAKEECKALL…TGPCDLSKAK (214 aa)) the chain is Cytoplasmic. Coiled-coil stretches lie at residues 29-58 (GSADSQNLREELQKTRQKAQELAVAIRLRL) and 144-169 (VEDLHQLEREILQVGEMIQDMEMKVN). Residues 153 to 202 (EILQVGEMIQDMEMKVNVPRWTVQARQAAGAELLSSASAGVSSVGGVSVE) are SNARE-like. Residues 215–234 (AATIFSAVLLAAVALAVCVA) form a helical; Anchor for type IV membrane protein membrane-spanning segment. The Extracellular segment spans residues 235–237 (KLS).

Belongs to the RGS7BP/RGS9BP family. As to quaternary structure, specifically interacts with isoform RGS9-1 of RGS9. Component of the RGS9-1-Gbeta5 complex composed of RGS9-1, Gbeta5 (GNB5) and RGS9BP. Specifically expressed in the retina. Only present in photoreceptors (at protein level).

The protein localises to the membrane. Its function is as follows. Regulator of G protein-coupled receptor (GPCR) signaling in phototransduction. Participates in the recovery phase of visual transduction via its interaction with RGS9-1 isoform. Acts as a membrane-anchor that mediates the targeting of RGS9-1 to the photoreceptor outer segment, where phototransduction takes place. Enhances the ability of RGS9-1 to stimulate G protein GTPase activity, allowing the visual signal to be terminated on the physiologically time scale. It also controls the proteolytic stability of RGS9-1, probably by protecting it from degradation. This is Regulator of G-protein signaling 9-binding protein (RGS9BP) from Bos taurus (Bovine).